A 142-amino-acid polypeptide reads, in one-letter code: Large ribosomal subunit protein uL13 (142 aa).

Belongs to the universal ribosomal protein uL13 family. In terms of assembly, part of the 50S ribosomal subunit.

This protein is one of the early assembly proteins of the 50S ribosomal subunit, although it is not seen to bind rRNA by itself. It is important during the early stages of 50S assembly. This Aliivibrio salmonicida (strain LFI1238) (Vibrio salmonicida (strain LFI1238)) protein is Large ribosomal subunit protein uL13.